A 357-amino-acid polypeptide reads, in one-letter code: tRNA-specific 2-thiouridylase MnmA (357 aa).

ATP contacts are provided by residues 7–14 (GLSGGVDS) and Leu-33. Cys-94 acts as the Nucleophile in catalysis. Cys-94 and Cys-193 are joined by a disulfide. Gly-119 is an ATP binding site. Positions 143–145 (KDQ) are interaction with tRNA. Cys-193 acts as the Cysteine persulfide intermediate in catalysis. Residues 298-299 (RY) form an interaction with tRNA region.

The protein belongs to the MnmA/TRMU family.

Its subcellular location is the cytoplasm. It carries out the reaction S-sulfanyl-L-cysteinyl-[protein] + uridine(34) in tRNA + AH2 + ATP = 2-thiouridine(34) in tRNA + L-cysteinyl-[protein] + A + AMP + diphosphate + H(+). Functionally, catalyzes the 2-thiolation of uridine at the wobble position (U34) of tRNA, leading to the formation of s(2)U34. The protein is tRNA-specific 2-thiouridylase MnmA of Synechococcus sp. (strain ATCC 27144 / PCC 6301 / SAUG 1402/1) (Anacystis nidulans).